The sequence spans 25 residues: Hemocyanin subunit 3 (25 aa).

Belongs to the tyrosinase family. Hemocyanin subfamily. Hemolymph.

The protein resides in the secreted. Its subcellular location is the extracellular space. In terms of biological role, hemocyanins are copper-containing oxygen carriers occurring freely dissolved in the hemolymph of many mollusks and arthropods. The chain is Hemocyanin subunit 3 from Maja squinado (Mediterranean spider crab).